The sequence spans 229 residues: uncharacterized protein (229 aa).

Helical transmembrane passes span 21–41 (IYSL…LMLY), 56–76 (MIYY…SGAA), 83–103 (ALPI…FIIV), 109–129 (TVFQ…IIGV), 141–161 (AMFA…FIGS), 162–182 (GMMS…LIAS), and 202–222 (WAVA…ISLL).

Belongs to the BI1 family.

It is found in the cell membrane. This is an uncharacterized protein from Streptococcus pyogenes serotype M6 (strain ATCC BAA-946 / MGAS10394).